The following is a 142-amino-acid chain: Phosphoribosyl-AMP cyclohydrolase (142 aa).

Asp-92 provides a ligand contact to Mg(2+). Cys-93 lines the Zn(2+) pocket. Positions 94 and 96 each coordinate Mg(2+). 2 residues coordinate Zn(2+): Cys-109 and Cys-116.

Belongs to the PRA-CH family. As to quaternary structure, homodimer. Mg(2+) is required as a cofactor. It depends on Zn(2+) as a cofactor.

The protein resides in the cytoplasm. The enzyme catalyses 1-(5-phospho-beta-D-ribosyl)-5'-AMP + H2O = 1-(5-phospho-beta-D-ribosyl)-5-[(5-phospho-beta-D-ribosylamino)methylideneamino]imidazole-4-carboxamide. The protein operates within amino-acid biosynthesis; L-histidine biosynthesis; L-histidine from 5-phospho-alpha-D-ribose 1-diphosphate: step 3/9. Catalyzes the hydrolysis of the adenine ring of phosphoribosyl-AMP. The chain is Phosphoribosyl-AMP cyclohydrolase from Halorhodospira halophila (strain DSM 244 / SL1) (Ectothiorhodospira halophila (strain DSM 244 / SL1)).